A 302-amino-acid polypeptide reads, in one-letter code: MAGRELSHLQQLEAESIQIIREVAAEFDNPVMLYSIGKDSSVMLHLARKAFYPGKIPFPLLHVDTGWKFKEMIAFRDAQAKKFGFELLTHTNPEGVAQGINPFDHGSAKHTDIMKTQGLKQALNQYGFDAAFGGARRDEEKSRAKERVYSFRDRHHRWDPKNQRPELWRTYNGAVNKGESIRVFPLSNWTELDIWQYIYQENIELVPLYFAAERPVVERGGQLIMADDERMKLEEGETIKHEVVRFRTLGCYPLTAAMHSQADNLEKIIEEMLLTRSSERQGRLIDSDQSASMEQKKRQGYF.

Residues 280 to 302 (RQGRLIDSDQSASMEQKKRQGYF) form a disordered region.

The protein belongs to the PAPS reductase family. CysD subfamily. As to quaternary structure, heterodimer composed of CysD, the smaller subunit, and CysN.

It catalyses the reaction sulfate + ATP + H(+) = adenosine 5'-phosphosulfate + diphosphate. Its pathway is sulfur metabolism; hydrogen sulfide biosynthesis; sulfite from sulfate: step 1/3. With CysN forms the ATP sulfurylase (ATPS) that catalyzes the adenylation of sulfate producing adenosine 5'-phosphosulfate (APS) and diphosphate, the first enzymatic step in sulfur assimilation pathway. APS synthesis involves the formation of a high-energy phosphoric-sulfuric acid anhydride bond driven by GTP hydrolysis by CysN coupled to ATP hydrolysis by CysD. The protein is Sulfate adenylyltransferase subunit 2 of Shewanella sp. (strain ANA-3).